The chain runs to 212 residues: Thiamine-phosphate synthase (212 aa).

38–42 contacts 4-amino-2-methyl-5-(diphosphooxymethyl)pyrimidine; that stretch reads QLREK. The Mg(2+) site is built by Asp71 and Asp90. Lys138 provides a ligand contact to 4-amino-2-methyl-5-(diphosphooxymethyl)pyrimidine. Position 166 (Gly166) interacts with 2-[(2R,5Z)-2-carboxy-4-methylthiazol-5(2H)-ylidene]ethyl phosphate.

The protein belongs to the thiamine-phosphate synthase family. Mg(2+) is required as a cofactor.

The catalysed reaction is 2-[(2R,5Z)-2-carboxy-4-methylthiazol-5(2H)-ylidene]ethyl phosphate + 4-amino-2-methyl-5-(diphosphooxymethyl)pyrimidine + 2 H(+) = thiamine phosphate + CO2 + diphosphate. It carries out the reaction 2-(2-carboxy-4-methylthiazol-5-yl)ethyl phosphate + 4-amino-2-methyl-5-(diphosphooxymethyl)pyrimidine + 2 H(+) = thiamine phosphate + CO2 + diphosphate. It catalyses the reaction 4-methyl-5-(2-phosphooxyethyl)-thiazole + 4-amino-2-methyl-5-(diphosphooxymethyl)pyrimidine + H(+) = thiamine phosphate + diphosphate. The protein operates within cofactor biosynthesis; thiamine diphosphate biosynthesis; thiamine phosphate from 4-amino-2-methyl-5-diphosphomethylpyrimidine and 4-methyl-5-(2-phosphoethyl)-thiazole: step 1/1. Functionally, condenses 4-methyl-5-(beta-hydroxyethyl)thiazole monophosphate (THZ-P) and 2-methyl-4-amino-5-hydroxymethyl pyrimidine pyrophosphate (HMP-PP) to form thiamine monophosphate (TMP). The polypeptide is Thiamine-phosphate synthase (Chlamydia abortus (strain DSM 27085 / S26/3) (Chlamydophila abortus)).